A 354-amino-acid chain; its full sequence is UPF0597 protein PPA0217 (354 aa).

It belongs to the UPF0597 family.

The protein is UPF0597 protein PPA0217 of Cutibacterium acnes (strain DSM 16379 / KPA171202) (Propionibacterium acnes).